The chain runs to 217 residues: Uracil phosphoribosyltransferase (217 aa).

5-phospho-alpha-D-ribose 1-diphosphate contacts are provided by residues Arg-84, Arg-109, and 137-145; that span reads DPMLATGGS. Uracil-binding positions include Ile-202 and 207 to 209; that span reads GDA. 5-phospho-alpha-D-ribose 1-diphosphate is bound at residue Asp-208.

Belongs to the UPRTase family. It depends on Mg(2+) as a cofactor.

It carries out the reaction UMP + diphosphate = 5-phospho-alpha-D-ribose 1-diphosphate + uracil. It participates in pyrimidine metabolism; UMP biosynthesis via salvage pathway; UMP from uracil: step 1/1. Its activity is regulated as follows. Allosterically activated by GTP. Functionally, catalyzes the conversion of uracil and 5-phospho-alpha-D-ribose 1-diphosphate (PRPP) to UMP and diphosphate. The protein is Uracil phosphoribosyltransferase of Synechococcus elongatus (strain ATCC 33912 / PCC 7942 / FACHB-805) (Anacystis nidulans R2).